The chain runs to 149 residues: Macrodomain Ter protein (149 aa).

The protein belongs to the MatP family. In terms of assembly, homodimer.

It localises to the cytoplasm. Its function is as follows. Required for spatial organization of the terminus region of the chromosome (Ter macrodomain) during the cell cycle. Prevents early segregation of duplicated Ter macrodomains during cell division. Binds specifically to matS, which is a 13 bp signature motif repeated within the Ter macrodomain. The chain is Macrodomain Ter protein from Vibrio vulnificus (strain CMCP6).